The chain runs to 258 residues: NAD kinase (258 aa).

Residue Asp51 is the Proton acceptor of the active site. NAD(+) contacts are provided by residues 51–52, Lys56, 119–120, Lys130, Asp149, 160–165, and Ala184; these read DG, ND, and TAYSLS.

It belongs to the NAD kinase family. A divalent metal cation is required as a cofactor.

The protein localises to the cytoplasm. The enzyme catalyses NAD(+) + ATP = ADP + NADP(+) + H(+). Its function is as follows. Involved in the regulation of the intracellular balance of NAD and NADP, and is a key enzyme in the biosynthesis of NADP. Catalyzes specifically the phosphorylation on 2'-hydroxyl of the adenosine moiety of NAD to yield NADP. The protein is NAD kinase of Thermotoga petrophila (strain ATCC BAA-488 / DSM 13995 / JCM 10881 / RKU-1).